The sequence spans 241 residues: Glucosamine-6-phosphate deaminase (241 aa).

Asp67 acts as the Proton acceptor; for enolization step in catalysis. Catalysis depends on Asn136, which acts as the For ring-opening step. The Proton acceptor; for ring-opening step role is filled by His138. Glu143 functions as the For ring-opening step in the catalytic mechanism.

The protein belongs to the glucosamine/galactosamine-6-phosphate isomerase family. NagB subfamily.

It catalyses the reaction alpha-D-glucosamine 6-phosphate + H2O = beta-D-fructose 6-phosphate + NH4(+). Its pathway is amino-sugar metabolism; N-acetylneuraminate degradation; D-fructose 6-phosphate from N-acetylneuraminate: step 5/5. Its function is as follows. Catalyzes the reversible isomerization-deamination of glucosamine 6-phosphate (GlcN6P) to form fructose 6-phosphate (Fru6P) and ammonium ion. In Bacillus velezensis (strain DSM 23117 / BGSC 10A6 / LMG 26770 / FZB42) (Bacillus amyloliquefaciens subsp. plantarum), this protein is Glucosamine-6-phosphate deaminase.